Here is a 1219-residue protein sequence, read N- to C-terminus: A disintegrin and metalloproteinase with thrombospondin motifs 18 (1219 aa).

Positions 1 to 47 (MECALLCLCALRAAGPGPPWGPAGLGRLAKALQLCCFCCASVAVALA) are cleaved as a signal peptide. The propeptide occupies 48-284 (SDSGSSGGSG…EYGGTGRPRR (237 aa)). N-linked (GlcNAc...) asparagine glycosylation is found at asparagine 151 and asparagine 190. The interval 217–248 (YPGSQRTYPGHSPSHTPPASQSQEPEYSHRRW) is disordered. Positions 218–241 (PGSQRTYPGHSPSHTPPASQSQEP) are enriched in polar residues. In terms of domain architecture, Peptidase M12B spans 293-498 (LNVETLVVAD…PQAGCLVDEP (206 aa)). Cystine bridges form between cysteine 369–cysteine 420, cysteine 395–cysteine 402, cysteine 414–cysteine 493, cysteine 453–cysteine 477, cysteine 521–cysteine 546, cysteine 532–cysteine 553, cysteine 541–cysteine 572, cysteine 566–cysteine 577, cysteine 601–cysteine 638, cysteine 605–cysteine 643, and cysteine 616–cysteine 628. Position 436 (histidine 436) interacts with Zn(2+). Glutamate 437 is a catalytic residue. Zn(2+) contacts are provided by histidine 440 and histidine 446. Residues 589–644 (HGQWSAWSKWSECSRTCGGGVKFQERHCSNPKPQYGGKYCPGSSRIYKLCNINPCP) enclose the TSP type-1 1 domain. Residues asparagine 745, asparagine 838, asparagine 865, and asparagine 909 are each glycosylated (N-linked (GlcNAc...) asparagine). TSP type-1 domains lie at 931 to 990 (CPAY…NSHA), 991 to 1049 (CPPE…GRCP), 1052 to 1116 (NRLQ…RTCP), and 1121 to 1176 (AVAS…NFCP). One can recognise a PLAC domain in the interval 1182 to 1219 (DDPSCVDFFSWCHLVPQHGVCNHKFYGKQCCRSCTRKS).

Zn(2+) serves as cofactor. The precursor is cleaved by a furin endopeptidase. Post-translationally, glycosylated. Can be O-fucosylated by POFUT2 on a serine or a threonine residue found within the consensus sequence C1-X(2)-(S/T)-C2-G of the TSP type-1 repeat domains where C1 and C2 are the first and second cysteine residue of the repeat, respectively. Fucosylated repeats can then be further glycosylated by the addition of a beta-1,3-glucose residue by the glucosyltransferase, B3GALTL. Fucosylation mediates the efficient secretion of ADAMTS family members. Can also be C-glycosylated with one or two mannose molecules on tryptophan residues within the consensus sequence W-X-X-W of the TPRs, and N-glycosylated. These other glycosylations can also facilitate secretion.

Its subcellular location is the secreted. The protein localises to the extracellular space. It is found in the extracellular matrix. The chain is A disintegrin and metalloproteinase with thrombospondin motifs 18 (Adamts18) from Mus musculus (Mouse).